The following is a 493-amino-acid chain: Trigger factor (493 aa).

The region spanning 169–254 (GDRVTMDYLG…VKEVAAPAET (86 aa)) is the PPIase FKBP-type domain. Residues 439–493 (ELLAEDEDGDDTKPAKKSAKKKAAKAEDASAEGEEAAPKKKAAAKKKAADEGDAE) form a disordered region.

Belongs to the FKBP-type PPIase family. Tig subfamily.

Its subcellular location is the cytoplasm. The enzyme catalyses [protein]-peptidylproline (omega=180) = [protein]-peptidylproline (omega=0). Involved in protein export. Acts as a chaperone by maintaining the newly synthesized protein in an open conformation. Functions as a peptidyl-prolyl cis-trans isomerase. This Allorhizobium ampelinum (strain ATCC BAA-846 / DSM 112012 / S4) (Agrobacterium vitis (strain S4)) protein is Trigger factor.